Reading from the N-terminus, the 398-residue chain is MNTPTHTHPHPFGSTATIRCERAAAELRTGRPVLLIDAHTRRHAVMALDSMTAQSFTTFANAVGNTHYLFLTPARSNVLGLEAPQGARIPLATLSYDSLVKLAYLRQPTHPTTWVPGDIMDAAATEITRLALLLPAIVAAPLTHHTEHAFADCQTLDLTDLDTAAAGASTTEYELVTRTPVPLRDLGMSEFIVFRGGIAQRDQVAILIGQPDLSSAVPVRVHSSCLTGDLFGSLKCDCGDQLRHGLATLKALGGGVLLYLDQEGRGNGIAAKIRAYGYQHVGLDTIDADAQLGFGPDERRYTGAVMMLRALGITRIQLLSNNPTKVERLRAAGIIVEQRIPVIGQITEQNEYYLRTKVSRAGHDLDIDALIMTSQRPQDPSETVDGETVKSIPKTGHA.

Residues methionine 1–glutamate 172 are unknown. The tract at residues tyrosine 173–alanine 398 is GTP cyclohydrolase II. Residue arginine 220–serine 224 coordinates GTP. Zn(2+) contacts are provided by cysteine 225, cysteine 236, and cysteine 238. GTP contacts are provided by residues glutamine 241, glutamate 263–arginine 265, and threonine 285. Aspartate 297 functions as the Proton acceptor in the catalytic mechanism. Catalysis depends on arginine 299, which acts as the Nucleophile. Residues serine 320 and lysine 325 each contribute to the GTP site. Residues glutamine 375–alanine 398 form a disordered region.

This sequence in the C-terminal section; belongs to the GTP cyclohydrolase II family. Zn(2+) serves as cofactor.

The enzyme catalyses GTP + 4 H2O = 2,5-diamino-6-hydroxy-4-(5-phosphoribosylamino)-pyrimidine + formate + 2 phosphate + 3 H(+). The protein operates within cofactor biosynthesis; riboflavin biosynthesis; 5-amino-6-(D-ribitylamino)uracil from GTP: step 1/4. Its function is as follows. Catalyzes the conversion of GTP to 2,5-diamino-6-ribosylamino-4(3H)-pyrimidinone 5'-phosphate (DARP), formate and pyrophosphate. The chain is GTP cyclohydrolase-2 (ribA) from Xylella fastidiosa (strain 9a5c).